The sequence spans 301 residues: Putative carboxypeptidase slr1534 (301 aa).

Ser-116 serves as the catalytic Nucleophile. Active-site charge relay system residues include Glu-206 and His-276.

It belongs to the peptidase S66 family.

This chain is Putative carboxypeptidase slr1534, found in Synechocystis sp. (strain ATCC 27184 / PCC 6803 / Kazusa).